A 440-amino-acid polypeptide reads, in one-letter code: Chromosome partition protein MukF (440 aa).

Residues 208 to 236 (LSETSGTLRELQDTLEAAGDKLQANLLRI) are leucine-zipper.

This sequence belongs to the MukF family. In terms of assembly, interacts, and probably forms a ternary complex, with MukE and MukB via its C-terminal region. The complex formation is stimulated by calcium or magnesium. It is required for an interaction between MukE and MukB.

Its subcellular location is the cytoplasm. The protein localises to the nucleoid. Involved in chromosome condensation, segregation and cell cycle progression. May participate in facilitating chromosome segregation by condensation DNA from both sides of a centrally located replisome during cell division. Not required for mini-F plasmid partitioning. Probably acts via its interaction with MukB and MukE. Overexpression results in anucleate cells. It has a calcium binding activity. The polypeptide is Chromosome partition protein MukF (Escherichia fergusonii (strain ATCC 35469 / DSM 13698 / CCUG 18766 / IAM 14443 / JCM 21226 / LMG 7866 / NBRC 102419 / NCTC 12128 / CDC 0568-73)).